The chain runs to 1090 residues: Neurofilament heavy polypeptide (1090 aa).

The segment at methionine 2–glutamine 98 is head. Phosphoserine is present on residues serine 74 and serine 122. The IF rod domain maps to glutamate 95–isoleucine 411. The segment at leucine 99–leucine 130 is coil 1A. A linker 1 region spans residues arginine 131–leucine 143. A coil 1B region spans residues tyrosine 144 to glutamine 242. Positions isoleucine 243–aspartate 264 are linker 12. Residues valine 265–glutamine 286 form a coil 2A region. The tract at residues serine 287 to tryptophan 290 is linker 2. Residues phenylalanine 291–isoleucine 411 are coil 2B. Residues serine 345, serine 416, and serine 419 each carry the phosphoserine modification. The interval glycine 412–lysine 1090 is tail. A disordered region spans residues glutamate 456–lysine 1090. Residues valine 468–glycine 495 are compositionally biased toward acidic residues. Residues alanine 496–alanine 506 show a composition bias toward low complexity. A phosphoserine mark is found at serine 508, serine 523, serine 529, serine 535, serine 541, serine 547, serine 553, serine 559, serine 565, serine 571, serine 577, serine 583, serine 589, serine 595, serine 601, serine 607, serine 613, serine 619, serine 625, serine 631, serine 637, serine 643, serine 649, serine 655, serine 661, serine 667, serine 673, serine 679, serine 685, serine 691, serine 697, serine 703, serine 709, serine 715, serine 721, serine 727, serine 733, serine 739, serine 745, serine 751, serine 757, serine 763, and serine 769. The segment covering serine 508–alanine 579 has biased composition (basic and acidic residues). 42 consecutive repeat copies span residues lysine 522–alanine 527, lysine 528–alanine 533, lysine 534–alanine 539, lysine 540–alanine 545, lysine 546–alanine 551, lysine 552–alanine 557, lysine 558–proline 563, lysine 564–proline 569, lysine 570–alanine 575, lysine 576–proline 581, lysine 582–valine 587, lysine 588–alanine 593, lysine 594–alanine 599, lysine 600–alanine 605, lysine 606–alanine 611, lysine 612–alanine 617, lysine 618–alanine 623, lysine 624–alanine 629, lysine 630–alanine 635, lysine 636–valine 641, lysine 642–alanine 647, lysine 648–alanine 653, lysine 654–alanine 659, lysine 660–alanine 665, lysine 666–alanine 671, lysine 672–valine 677, lysine 678–alanine 683, lysine 684–proline 689, lysine 690–alanine 695, lysine 696–valine 701, lysine 702–alanine 707, lysine 708–valine 713, lysine 714–alanine 719, lysine 720–valine 725, lysine 726–alanine 731, lysine 732–valine 737, lysine 738–alanine 743, lysine 744–alanine 749, lysine 750–alanine 755, lysine 756–alanine 761, lysine 762–valine 767, and lysine 768–alanine 773. The tract at residues lysine 522–glutamate 892 is 52 X 6 AA approximate tandem repeats of K-S-P-[AGISV]-[EATK]-[APVQ]. A compositionally biased stretch (basic and acidic residues) spans serine 595–alanine 633. The span at serine 649–glycine 717 shows a compositional bias: basic and acidic residues. The span at serine 745–alanine 781 shows a compositional bias: basic and acidic residues. One copy of the 43; approximate repeat lies at lysine 774–glutamate 779. 6 consecutive repeat copies span residues lysine 782–alanine 787, lysine 788–alanine 793, lysine 794–glutamate 799, lysine 808–alanine 813, lysine 814–glutamate 819, and lysine 833–glutamine 838. Phosphoserine occurs at positions 783, 789, 795, 809, 815, and 834. Residues lysine 788 to serine 834 are compositionally biased toward basic and acidic residues. A Phosphothreonine modification is found at threonine 839. Composition is skewed to basic and acidic residues over residues glutamate 843–alanine 964 and glycine 974–lysine 1090. 3 consecutive repeat copies span residues lysine 858 to glutamate 863, lysine 866 to glutamate 871, and lysine 887 to glutamate 892. Residues serine 859, serine 867, serine 888, and serine 947 each carry the phosphoserine modification.

It belongs to the intermediate filament family. Forms heterodimers with NEFL; which can further hetero-oligomerize (in vitro). Forms heterodimers with INA (in vitro). There are a number of repeats of the tripeptide K-S-P, NFH is phosphorylated on a number of the serines in this motif. It is thought that phosphorylation of NFH results in the formation of interfilament cross bridges that are important in the maintenance of axonal caliber. In terms of processing, phosphorylation seems to play a major role in the functioning of the larger neurofilament polypeptides (NF-M and NF-H), the levels of phosphorylation being altered developmentally and coincidentally with a change in the neurofilament function. Post-translationally, phosphorylated in the head and rod regions by the PKC kinase PKN1, leading to the inhibition of polymerization. In terms of tissue distribution, expressed in the sciatic nerve (at protein level).

The protein localises to the cytoplasm. It is found in the cytoskeleton. It localises to the cell projection. Its subcellular location is the axon. Functionally, neurofilaments usually contain three intermediate filament proteins: NEFL, NEFM, and NEFH which are involved in the maintenance of neuronal caliber. NEFH has an important function in mature axons that is not subserved by the two smaller NF proteins. May additionally cooperate with the neuronal intermediate filament proteins PRPH and INA to form neuronal filamentous networks. The protein is Neurofilament heavy polypeptide (Nefh) of Mus musculus (Mouse).